Here is a 200-residue protein sequence, read N- to C-terminus: WASH complex subunit 3 (200 aa).

A coiled-coil region spans residues Ser-56–Ile-76. 2 disordered regions span residues Val-87 to Ile-130 and Asp-165 to Asp-200.

This sequence belongs to the CCDC53 family. In terms of assembly, component of the WASH complex.

In Danio rerio (Zebrafish), this protein is WASH complex subunit 3.